The primary structure comprises 534 residues: High affinity cGMP-specific 3',5'-cyclic phosphodiesterase 9A (534 aa).

The region spanning 175–496 is the PDEase domain; sequence PRRDVPTYPK…EHYEELKQLD (322 aa). Histidine 251 acts as the Proton donor in catalysis. Residue 251–255 participates in 3',5'-cyclic GMP binding; that stretch reads HNFRH. 3 residues coordinate Zn(2+): histidine 255, histidine 291, and aspartate 292. Aspartate 292 is a binding site for 3',5'-cyclic GMP. Residue aspartate 292 coordinates Mg(2+). Position 318 is a phosphoserine (serine 318). Residues aspartate 401, tyrosine 423, and 451–452 contribute to the 3',5'-cyclic GMP site; that span reads AQ. Aspartate 401 lines the Zn(2+) pocket. The segment at 500–534 is disordered; that stretch reads KELQKKTESLTSGAPENTTEKNRDAKDSEGHSPPN. The segment covering 517-534 has biased composition (basic and acidic residues); sequence TTEKNRDAKDSEGHSPPN.

The protein belongs to the cyclic nucleotide phosphodiesterase family. PDE9 subfamily. In terms of assembly, homodimer. Zn(2+) is required as a cofactor. Mg(2+) serves as cofactor. As to expression, highly expressed in kidney. Lower levels in liver, lung and brain. Widely expressed in brain, with highest expression in cerebellar Purkinje cells. Present in heart (at protein level).

The protein resides in the cell projection. Its subcellular location is the ruffle membrane. It localises to the cytoplasm. The protein localises to the perinuclear region. It is found in the golgi apparatus. The protein resides in the endoplasmic reticulum. Its subcellular location is the cell membrane. It localises to the sarcolemma. It carries out the reaction 3',5'-cyclic GMP + H2O = GMP + H(+). Its pathway is purine metabolism; 3',5'-cyclic GMP degradation; GMP from 3',5'-cyclic GMP: step 1/1. Its activity is regulated as follows. Inhibited by SCH 51866 and moderately, by zaprinast. Specifically inhibited by PF-04447943 (6-[(3S,4S)-4-methyl-1-(pyrimidin-2-ylmethyl)pyrrolidin-3-yl]-1-(tetrahydro-2H-pyran-4-yl)-1,5-dihydro-4H-pyrazolo[3,4-d]pyrimidin-4-one). Functionally, specifically hydrolyzes the second messenger cGMP, which is a key regulator of many important physiological processes. Highly specific: compared to other members of the cyclic nucleotide phosphodiesterase family, has the highest affinity and selectivity for cGMP. Specifically regulates natriuretic-peptide-dependent cGMP signaling in heart, acting as a regulator of cardiac hypertrophy in myocytes and muscle. Does not regulate nitric oxide-dependent cGMP in heart. Additional experiments are required to confirm whether its ability to hydrolyze natriuretic-peptide-dependent cGMP is specific to heart or is a general feature of the protein. In brain, involved in cognitive function, such as learning and long-term memory. The chain is High affinity cGMP-specific 3',5'-cyclic phosphodiesterase 9A (Pde9a) from Mus musculus (Mouse).